The primary structure comprises 334 residues: N-acetyl-gamma-glutamyl-phosphate reductase (334 aa).

The active site involves Cys154.

The protein belongs to the NAGSA dehydrogenase family. Type 1 subfamily.

It localises to the cytoplasm. It catalyses the reaction N-acetyl-L-glutamate 5-semialdehyde + phosphate + NADP(+) = N-acetyl-L-glutamyl 5-phosphate + NADPH + H(+). It functions in the pathway amino-acid biosynthesis; L-arginine biosynthesis; N(2)-acetyl-L-ornithine from L-glutamate: step 3/4. In terms of biological role, catalyzes the NADPH-dependent reduction of N-acetyl-5-glutamyl phosphate to yield N-acetyl-L-glutamate 5-semialdehyde. The sequence is that of N-acetyl-gamma-glutamyl-phosphate reductase from Escherichia coli (strain K12).